We begin with the raw amino-acid sequence, 201 residues long: FMN-dependent NADH:quinone oxidoreductase (201 aa).

FMN contacts are provided by residues Ser-9 and 16–18; that span reads SYS.

Belongs to the azoreductase type 1 family. Homodimer. The cofactor is FMN.

The catalysed reaction is 2 a quinone + NADH + H(+) = 2 a 1,4-benzosemiquinone + NAD(+). The enzyme catalyses N,N-dimethyl-1,4-phenylenediamine + anthranilate + 2 NAD(+) = 2-(4-dimethylaminophenyl)diazenylbenzoate + 2 NADH + 2 H(+). Its function is as follows. Quinone reductase that provides resistance to thiol-specific stress caused by electrophilic quinones. In terms of biological role, also exhibits azoreductase activity. Catalyzes the reductive cleavage of the azo bond in aromatic azo compounds to the corresponding amines. The polypeptide is FMN-dependent NADH:quinone oxidoreductase (Mesomycoplasma hyopneumoniae (strain J / ATCC 25934 / NCTC 10110) (Mycoplasma hyopneumoniae)).